A 344-amino-acid chain; its full sequence is Succinylglutamate desuccinylase (344 aa).

Residues His63, Glu66, and His160 each contribute to the Zn(2+) site. Glu224 is an active-site residue.

This sequence belongs to the AspA/AstE family. Succinylglutamate desuccinylase subfamily. Zn(2+) serves as cofactor.

It carries out the reaction N-succinyl-L-glutamate + H2O = L-glutamate + succinate. Its pathway is amino-acid degradation; L-arginine degradation via AST pathway; L-glutamate and succinate from L-arginine: step 5/5. Functionally, transforms N(2)-succinylglutamate into succinate and glutamate. The polypeptide is Succinylglutamate desuccinylase (Shewanella sp. (strain MR-4)).